A 765-amino-acid polypeptide reads, in one-letter code: DNA ligase (765 aa).

Residues 1–34 (MAGDDEDRAVPAAEGAPPPSALPPVSGLDVKAAE) are disordered. NAD(+) contacts are provided by residues 61–65 (DAEYD), 110–111 (SL), and E144. K146 functions as the N6-AMP-lysine intermediate in the catalytic mechanism. Residues R167, E204, K317, and K341 each coordinate NAD(+). Residues C446, C449, C464, and C470 each coordinate Zn(2+). Residues 687–765 (ATDSAIAGKT…EDEWLAIAQG (79 aa)) form the BRCT domain.

The protein belongs to the NAD-dependent DNA ligase family. LigA subfamily. It depends on Mg(2+) as a cofactor. The cofactor is Mn(2+).

The enzyme catalyses NAD(+) + (deoxyribonucleotide)n-3'-hydroxyl + 5'-phospho-(deoxyribonucleotide)m = (deoxyribonucleotide)n+m + AMP + beta-nicotinamide D-nucleotide.. DNA ligase that catalyzes the formation of phosphodiester linkages between 5'-phosphoryl and 3'-hydroxyl groups in double-stranded DNA using NAD as a coenzyme and as the energy source for the reaction. It is essential for DNA replication and repair of damaged DNA. In Paracoccus denitrificans (strain Pd 1222), this protein is DNA ligase.